A 502-amino-acid chain; its full sequence is UDP-N-acetylmuramoylalanine--D-glutamate ligase (502 aa).

ATP is bound at residue 136–142 (GTNGKTT).

Belongs to the MurCDEF family.

The protein resides in the cytoplasm. It catalyses the reaction UDP-N-acetyl-alpha-D-muramoyl-L-alanine + D-glutamate + ATP = UDP-N-acetyl-alpha-D-muramoyl-L-alanyl-D-glutamate + ADP + phosphate + H(+). Its pathway is cell wall biogenesis; peptidoglycan biosynthesis. Cell wall formation. Catalyzes the addition of glutamate to the nucleotide precursor UDP-N-acetylmuramoyl-L-alanine (UMA). In Corynebacterium jeikeium (strain K411), this protein is UDP-N-acetylmuramoylalanine--D-glutamate ligase.